The chain runs to 160 residues: Large ribosomal subunit protein bL9 (160 aa).

The protein belongs to the bacterial ribosomal protein bL9 family.

Functionally, binds to the 23S rRNA. This Neorickettsia sennetsu (strain ATCC VR-367 / Miyayama) (Ehrlichia sennetsu) protein is Large ribosomal subunit protein bL9.